The following is a 236-amino-acid chain: MGKRIISQNRGKGTPTYRAPSHRYRADIKHIKFSGDLVRGIVEDIMHDPARTAPVALVRLENGEKQYVLATEGTYIGQEIACGPAAEIQPGNTLPLASIPEGMPICNIESKPGHGGQFARASGVYGILVAHDVGATVVQLPSGEMKWLNPNCLATIGVVAGGGRTEKPLVKAGKSFYKYRSKAVKWPRVRGVAMNAVDHPFGGGGRQHPGRPKTVSRGTPPGRKVGSIAARRTGKR.

The interval 198-236 (DHPFGGGGRQHPGRPKTVSRGTPPGRKVGSIAARRTGKR) is disordered.

It belongs to the universal ribosomal protein uL2 family. Part of the 50S ribosomal subunit. Forms a bridge to the 30S subunit in the 70S ribosome.

Functionally, one of the primary rRNA binding proteins. Required for association of the 30S and 50S subunits to form the 70S ribosome, for tRNA binding and peptide bond formation. It has been suggested to have peptidyltransferase activity; this is somewhat controversial. Makes several contacts with the 16S rRNA in the 70S ribosome. This chain is Large ribosomal subunit protein uL2, found in Methanothrix thermoacetophila (strain DSM 6194 / JCM 14653 / NBRC 101360 / PT) (Methanosaeta thermophila).